The chain runs to 666 residues: Threonine--tRNA ligase (666 aa).

The TGS domain maps to 1–64 (MSDTVSLTFP…VDGKIEIVTR (64 aa)). The tract at residues 245–553 (DHRKLGREMD…LIENFAGHMP (309 aa)) is catalytic. The Zn(2+) site is built by Cys347, His398, and His530.

It belongs to the class-II aminoacyl-tRNA synthetase family. In terms of assembly, homodimer. It depends on Zn(2+) as a cofactor.

The protein resides in the cytoplasm. The catalysed reaction is tRNA(Thr) + L-threonine + ATP = L-threonyl-tRNA(Thr) + AMP + diphosphate + H(+). Its function is as follows. Catalyzes the attachment of threonine to tRNA(Thr) in a two-step reaction: L-threonine is first activated by ATP to form Thr-AMP and then transferred to the acceptor end of tRNA(Thr). Also edits incorrectly charged L-seryl-tRNA(Thr). The protein is Threonine--tRNA ligase of Allorhizobium ampelinum (strain ATCC BAA-846 / DSM 112012 / S4) (Agrobacterium vitis (strain S4)).